Reading from the N-terminus, the 388-residue chain is Na(+)/H(+) antiporter NhaA (388 aa).

Topologically, residues 1–11 (MKHLHRFFSSD) are cytoplasmic. The helical transmembrane segment at 12-31 (ASGGIILIIAAILAMMMANS) threads the bilayer. At 32–58 (GATSGWYHDFLETPVQLRVGSLEINKN) the chain is on the periplasmic side. Residues 59-80 (MLLWINDALMAVFFLLVGLEVK) traverse the membrane as a helical segment. The Cytoplasmic portion of the chain corresponds to 81–96 (RELMQGSLASLRQAAF). The chain crosses the membrane as a helical span at residues 97 to 116 (PVIAAIGGMIVPALLYLAFN). Residues 117–122 (YADPIT) are Periplasmic-facing. The helical transmembrane segment at 123–130 (REGWAIPA) threads the bilayer. The Cytoplasmic segment spans residues 131 to 154 (ATDIAFALGVLALLGSRVPLALKI). A helical membrane pass occupies residues 155–176 (FLMALAIIDDLGAIIIIALFYT). Topologically, residues 177–180 (NDLS) are periplasmic. The helical transmembrane segment at 181 to 200 (MASLGVAAVAIAVLAVLNLC) threads the bilayer. The Cytoplasmic portion of the chain corresponds to 201–204 (GVRR). The chain crosses the membrane as a helical span at residues 205–222 (TGVYILVGVVLWTAVLKS). Residue glycine 223 is a topological domain, periplasmic. Residues 224–236 (VHATLAGVIVGFF) form a helical membrane-spanning segment. The Cytoplasmic segment spans residues 237 to 253 (IPLKEKHGRSPAKRLEH). The helical transmembrane segment at 254 to 272 (VLHPWVAYLILPLFAFANA) threads the bilayer. Residues 273-286 (GVSLQGVTLDGLTS) are Periplasmic-facing. Residues 287–310 (ILPLGIIAGLLIGKPLGISLFCWL) traverse the membrane as a helical segment. Residues 311–339 (ALRLKLAHLPEGTTYQQIMAVGILCGIGF) lie on the Cytoplasmic side of the membrane. The chain crosses the membrane as a helical span at residues 340-350 (TMSIFIASLAF). The Periplasmic segment spans residues 351–357 (GSVDPEL). The helical transmembrane segment at 358 to 380 (INWAKLGILVGSISSAVIGYSWL) threads the bilayer. Topologically, residues 381-388 (RVRLRPSV) are cytoplasmic.

The protein belongs to the NhaA Na(+)/H(+) (TC 2.A.33) antiporter family.

The protein localises to the cell inner membrane. It carries out the reaction Na(+)(in) + 2 H(+)(out) = Na(+)(out) + 2 H(+)(in). Na(+)/H(+) antiporter that extrudes sodium in exchange for external protons. The polypeptide is Na(+)/H(+) antiporter NhaA (Shigella boydii serotype 4 (strain Sb227)).